Consider the following 611-residue polypeptide: Endo-1,4-beta-xylanase A (611 aa).

The N-terminal stretch at 1-26 is a signal peptide; that stretch reads MRTAMAKSLGAAAFLGAALFAHTLAA. Residues 27 to 128 form the CBM2 domain; it reads QTATCSYNIT…SVGGSICSGS (102 aa). Disulfide bonds link cysteine 31–cysteine 125, cysteine 184–cysteine 215, and cysteine 194–cysteine 209. In terms of domain architecture, CBM10 spans 183 to 212; the sequence is QCNWYGTLYPLCVTTTNGWGWEDQRSCIAR. A GH10 domain is found at 281–607; the sequence is SGGNADIFTS…KPAYQGVVEA (327 aa). Residue glutamate 391 is the Proton donor of the active site. The Nucleophile role is filled by glutamate 510.

It belongs to the glycosyl hydrolase 10 (cellulase F) family.

It catalyses the reaction Endohydrolysis of (1-&gt;4)-beta-D-xylosidic linkages in xylans.. It functions in the pathway glycan degradation; xylan degradation. The protein is Endo-1,4-beta-xylanase A (xynA) of Cellvibrio japonicus (strain Ueda107) (Pseudomonas fluorescens subsp. cellulosa).